Consider the following 165-residue polypeptide: Endoribonuclease YbeY (165 aa).

Residues histidine 130, histidine 134, and histidine 140 each contribute to the Zn(2+) site.

It belongs to the endoribonuclease YbeY family. It depends on Zn(2+) as a cofactor.

It is found in the cytoplasm. Functionally, single strand-specific metallo-endoribonuclease involved in late-stage 70S ribosome quality control and in maturation of the 3' terminus of the 16S rRNA. The chain is Endoribonuclease YbeY from Streptococcus pyogenes serotype M28 (strain MGAS6180).